Reading from the N-terminus, the 59-residue chain is Large ribosomal subunit protein uL30 (59 aa).

The protein belongs to the universal ribosomal protein uL30 family. As to quaternary structure, part of the 50S ribosomal subunit.

This is Large ribosomal subunit protein uL30 from Escherichia coli (strain UTI89 / UPEC).